The sequence spans 462 residues: tRNA modification GTPase MnmE (462 aa).

Arg-22, Glu-87, and Arg-126 together coordinate (6S)-5-formyl-5,6,7,8-tetrahydrofolate. Residues 220–382 enclose the TrmE-type G domain; sequence GLKVAIVGRP…LARKVQEIVL (163 aa). Asn-230 is a K(+) binding site. GTP is bound by residues 230–235, 249–255, and 274–277; these read NVGKSS, SNIPGTT, and DTAG. Ser-234 provides a ligand contact to Mg(2+). K(+) contacts are provided by Ser-249, Ile-251, and Thr-254. Thr-255 provides a ligand contact to Mg(2+). Lys-462 lines the (6S)-5-formyl-5,6,7,8-tetrahydrofolate pocket.

It belongs to the TRAFAC class TrmE-Era-EngA-EngB-Septin-like GTPase superfamily. TrmE GTPase family. Homodimer. Heterotetramer of two MnmE and two MnmG subunits. The cofactor is K(+).

Its subcellular location is the cytoplasm. Its function is as follows. Exhibits a very high intrinsic GTPase hydrolysis rate. Involved in the addition of a carboxymethylaminomethyl (cmnm) group at the wobble position (U34) of certain tRNAs, forming tRNA-cmnm(5)s(2)U34. This is tRNA modification GTPase MnmE from Moorella thermoacetica (strain ATCC 39073 / JCM 9320).